We begin with the raw amino-acid sequence, 55 residues long: Protein CADMIUM TOLERANCE 1 (55 aa).

Residues 24 to 40 (GCLYACIFTALCCFCCY) form a helical membrane-spanning segment.

It belongs to the CYSTM1 family.

Its subcellular location is the cell membrane. The protein localises to the secreted. The protein resides in the cell wall. In terms of biological role, confers resistance to heavy metal ions (e.g. cadmium (CdCl(2)) and copper (CuCl(2))) by chelating them at the plasma membrane of root cells, thus stopping their entry and reducing their accumulation. In Echinochloa crus-galli subsp. caudata (Cockspur), this protein is Protein CADMIUM TOLERANCE 1.